Reading from the N-terminus, the 342-residue chain is Isopentenyl-diphosphate delta-isomerase (342 aa).

11–12 contributes to the substrate binding site; it reads RK. FMN is bound by residues serine 68, 69-71, serine 99, and asparagine 127; that span reads SMT. 99 to 101 lines the substrate pocket; it reads SMR. Glutamine 162 contributes to the substrate binding site. Glutamate 163 serves as a coordination point for Mg(2+). Residues lysine 194, threonine 224, 274–276, and 295–296 each bind FMN; these read GLK and AG.

The protein belongs to the IPP isomerase type 2 family. Homooctamer. Dimer of tetramers. FMN serves as cofactor. NADPH is required as a cofactor. Requires Mg(2+) as cofactor.

It localises to the cytoplasm. The catalysed reaction is isopentenyl diphosphate = dimethylallyl diphosphate. In terms of biological role, involved in the biosynthesis of isoprenoids. Catalyzes the 1,3-allylic rearrangement of the homoallylic substrate isopentenyl (IPP) to its allylic isomer, dimethylallyl diphosphate (DMAPP). In Rickettsia akari (strain Hartford), this protein is Isopentenyl-diphosphate delta-isomerase.